We begin with the raw amino-acid sequence, 122 residues long: Large ribosomal subunit protein bL12 (122 aa).

This sequence belongs to the bacterial ribosomal protein bL12 family. As to quaternary structure, homodimer. Part of the ribosomal stalk of the 50S ribosomal subunit. Forms a multimeric L10(L12)X complex, where L10 forms an elongated spine to which 2 to 4 L12 dimers bind in a sequential fashion. Binds GTP-bound translation factors.

In terms of biological role, forms part of the ribosomal stalk which helps the ribosome interact with GTP-bound translation factors. Is thus essential for accurate translation. The polypeptide is Large ribosomal subunit protein bL12 (Neisseria lactamica).